Consider the following 329-residue polypeptide: Meiotic drive suppressor wtf21 (329 aa).

Residues 1–68 are disordered; it reads MKNNYTSLKS…RENNPSRSTD (68 aa). Positions 19–30 are enriched in basic and acidic residues; sequence KTDHEIDLEKGP. The next 5 membrane-spanning stretches (helical) occupy residues 73–95, 110–132, 165–182, 192–214, and 290–312; these read FLIK…ICYL, WTLF…YFYE, IIIW…FVYI, ALIC…VCIP, and GIAF…IRGA.

Belongs to the WTF family. In terms of assembly, homomer. Interacts with other proteins that exhibit high sequence similarity.

The protein resides in the spore membrane. It is found in the vacuole membrane. Functionally, acts as a suppressor component of the dual wtf meiotic drive system, and can suppress but not confer meiotic drive by compatible poisons. Wtf meiotic drive systems promote unequal transmission of alleles from the parental zygote to progeny spores by encoding a poison and an antidote from the same locus; the poison is trans-acting and forms toxic aggregates in all spores within an ascus, wherease the antidote is spore-specific and targets aggregates for degradation by the vacuole. Meiotic drive by wtf systems therefore lead to poisoning of all progeny that do not inherit the dual poison/antidote allele, or express a compatible antidote. In Schizosaccharomyces pombe (strain 972 / ATCC 24843) (Fission yeast), this protein is Meiotic drive suppressor wtf21.